Here is a 306-residue protein sequence, read N- to C-terminus: UDP-3-O-acyl-N-acetylglucosamine deacetylase (306 aa).

The Zn(2+) site is built by His79, His238, and Asp242. Catalysis depends on His265, which acts as the Proton donor.

Belongs to the LpxC family. It depends on Zn(2+) as a cofactor.

The enzyme catalyses a UDP-3-O-[(3R)-3-hydroxyacyl]-N-acetyl-alpha-D-glucosamine + H2O = a UDP-3-O-[(3R)-3-hydroxyacyl]-alpha-D-glucosamine + acetate. It functions in the pathway glycolipid biosynthesis; lipid IV(A) biosynthesis; lipid IV(A) from (3R)-3-hydroxytetradecanoyl-[acyl-carrier-protein] and UDP-N-acetyl-alpha-D-glucosamine: step 2/6. Catalyzes the hydrolysis of UDP-3-O-myristoyl-N-acetylglucosamine to form UDP-3-O-myristoylglucosamine and acetate, the committed step in lipid A biosynthesis. The sequence is that of UDP-3-O-acyl-N-acetylglucosamine deacetylase from Shewanella frigidimarina (strain NCIMB 400).